We begin with the raw amino-acid sequence, 272 residues long: 2-succinyl-6-hydroxy-2,4-cyclohexadiene-1-carboxylate synthase (272 aa).

The protein belongs to the AB hydrolase superfamily. MenH family. Monomer.

It carries out the reaction 5-enolpyruvoyl-6-hydroxy-2-succinyl-cyclohex-3-ene-1-carboxylate = (1R,6R)-6-hydroxy-2-succinyl-cyclohexa-2,4-diene-1-carboxylate + pyruvate. It participates in quinol/quinone metabolism; 1,4-dihydroxy-2-naphthoate biosynthesis; 1,4-dihydroxy-2-naphthoate from chorismate: step 3/7. Its pathway is quinol/quinone metabolism; menaquinone biosynthesis. Catalyzes a proton abstraction reaction that results in 2,5-elimination of pyruvate from 2-succinyl-5-enolpyruvyl-6-hydroxy-3-cyclohexene-1-carboxylate (SEPHCHC) and the formation of 2-succinyl-6-hydroxy-2,4-cyclohexadiene-1-carboxylate (SHCHC). The chain is 2-succinyl-6-hydroxy-2,4-cyclohexadiene-1-carboxylate synthase from Yersinia pestis (strain Pestoides F).